We begin with the raw amino-acid sequence, 215 residues long: Riboflavin synthase (215 aa).

Lumazine-binding repeat units follow at residues 1–96 (MFTG…FGGH) and 97–193 (IVSG…EQFL). 2,4-dihydroxypteridine contacts are provided by residues 4–6 (GII), 47–49 (CLT), 61–66 (DVMSET), 100–102 (GHI), Lys135, 144–146 (SLT), and 158–163 (SIIPHT).

As to quaternary structure, homotrimer.

It carries out the reaction 2 6,7-dimethyl-8-(1-D-ribityl)lumazine + H(+) = 5-amino-6-(D-ribitylamino)uracil + riboflavin. It participates in cofactor biosynthesis; riboflavin biosynthesis; riboflavin from 2-hydroxy-3-oxobutyl phosphate and 5-amino-6-(D-ribitylamino)uracil: step 2/2. Its function is as follows. Catalyzes the dismutation of two molecules of 6,7-dimethyl-8-ribityllumazine, resulting in the formation of riboflavin and 5-amino-6-(D-ribitylamino)uracil. This chain is Riboflavin synthase (ribE), found in Actinobacillus pleuropneumoniae (Haemophilus pleuropneumoniae).